The chain runs to 259 residues: Ribosomal RNA large subunit methyltransferase E (259 aa).

The S-adenosyl-L-methionine site is built by G49, W51, D69, D88, and D112. Catalysis depends on K152, which acts as the Proton acceptor. Positions 199-257 constitute a TRAM domain; it reads PIAEGDEHTVEIVDTGDEGDGIARIEGYTLFVDDAAEGDTVDVTVTDLKPNYGFAERRD.

Belongs to the class I-like SAM-binding methyltransferase superfamily. RNA methyltransferase RlmE family.

It is found in the cytoplasm. It carries out the reaction uridine(2552) in 23S rRNA + S-adenosyl-L-methionine = 2'-O-methyluridine(2552) in 23S rRNA + S-adenosyl-L-homocysteine + H(+). In terms of biological role, specifically methylates the uridine in position 2552 of 23S rRNA at the 2'-O position of the ribose in the fully assembled 50S ribosomal subunit. The sequence is that of Ribosomal RNA large subunit methyltransferase E from Halobacterium salinarum (strain ATCC 29341 / DSM 671 / R1).